The chain runs to 132 residues: Transmembrane protein 170B (132 aa).

At M1–W37 the chain is on the extracellular side. N12 is a glycosylation site (N-linked (GlcNAc...) asparagine). The chain crosses the membrane as a helical span at residues I38–F58. Over V59–R68 the chain is Cytoplasmic. A helical transmembrane segment spans residues V69 to T89. The Extracellular segment spans residues S90–M104. A helical membrane pass occupies residues A105–F125. At S126–L132 the chain is on the cytoplasmic side.

It belongs to the TMEM170 family. As to quaternary structure, interacts with CTNNB1.

It localises to the cell membrane. The polypeptide is Transmembrane protein 170B (Mus musculus (Mouse)).